The primary structure comprises 315 residues: Ribonuclease Z (315 aa).

Zn(2+) is bound by residues H62, H64, D66, H67, H144, D215, and H273. D66 acts as the Proton acceptor in catalysis.

Belongs to the RNase Z family. Homodimer. Zn(2+) is required as a cofactor.

It catalyses the reaction Endonucleolytic cleavage of RNA, removing extra 3' nucleotides from tRNA precursor, generating 3' termini of tRNAs. A 3'-hydroxy group is left at the tRNA terminus and a 5'-phosphoryl group is left at the trailer molecule.. Zinc phosphodiesterase, which displays some tRNA 3'-processing endonuclease activity. Probably involved in tRNA maturation, by removing a 3'-trailer from precursor tRNA. This chain is Ribonuclease Z, found in Synechococcus sp. (strain CC9311).